A 310-amino-acid chain; its full sequence is Protein-L-isoaspartate O-methyltransferase (310 aa).

Disordered regions lie at residues 1-46 (MSGE…DKPA) and 60-79 (ALPG…TVLK). A compositionally biased stretch (basic and acidic residues) spans 14–34 (EDLKRAPRKSEVRSGSGERHA). Positions 35–46 (ASAVPKAADKPA) are enriched in low complexity. Serine 157 is a catalytic residue.

It belongs to the methyltransferase superfamily. L-isoaspartyl/D-aspartyl protein methyltransferase family.

It is found in the cytoplasm. The enzyme catalyses [protein]-L-isoaspartate + S-adenosyl-L-methionine = [protein]-L-isoaspartate alpha-methyl ester + S-adenosyl-L-homocysteine. Functionally, catalyzes the methyl esterification of L-isoaspartyl residues in peptides and proteins that result from spontaneous decomposition of normal L-aspartyl and L-asparaginyl residues. It plays a role in the repair and/or degradation of damaged proteins. The protein is Protein-L-isoaspartate O-methyltransferase of Burkholderia ambifaria (strain ATCC BAA-244 / DSM 16087 / CCUG 44356 / LMG 19182 / AMMD) (Burkholderia cepacia (strain AMMD)).